The sequence spans 234 residues: Putative methyltransferase-like protein 15P1 (234 aa).

Residues 100–102 (GGH), D119, F146, D169, and Q176 contribute to the S-adenosyl-L-methionine site.

This sequence belongs to the methyltransferase superfamily. RsmH family.

Probable S-adenosyl-L-methionine-dependent methyltransferase. The chain is Putative methyltransferase-like protein 15P1 (METTL15P1) from Homo sapiens (Human).